Reading from the N-terminus, the 526-residue chain is Glucose-6-phosphate isomerase (526 aa).

Glutamate 343 serves as the catalytic Proton donor. Residues histidine 374 and lysine 494 contribute to the active site.

The protein belongs to the GPI family.

The protein resides in the cytoplasm. The enzyme catalyses alpha-D-glucose 6-phosphate = beta-D-fructose 6-phosphate. Its pathway is carbohydrate biosynthesis; gluconeogenesis. The protein operates within carbohydrate degradation; glycolysis; D-glyceraldehyde 3-phosphate and glycerone phosphate from D-glucose: step 2/4. In terms of biological role, catalyzes the reversible isomerization of glucose-6-phosphate to fructose-6-phosphate. In Dechloromonas aromatica (strain RCB), this protein is Glucose-6-phosphate isomerase.